The sequence spans 405 residues: Arginine biosynthesis bifunctional protein ArgJ (405 aa).

The substrate site is built by Thr-152, Lys-178, Thr-189, Glu-276, Asn-400, and Thr-405. The active-site Nucleophile is the Thr-189.

The protein belongs to the ArgJ family. In terms of assembly, heterotetramer of two alpha and two beta chains.

It is found in the cytoplasm. It catalyses the reaction N(2)-acetyl-L-ornithine + L-glutamate = N-acetyl-L-glutamate + L-ornithine. The enzyme catalyses L-glutamate + acetyl-CoA = N-acetyl-L-glutamate + CoA + H(+). It functions in the pathway amino-acid biosynthesis; L-arginine biosynthesis; L-ornithine and N-acetyl-L-glutamate from L-glutamate and N(2)-acetyl-L-ornithine (cyclic): step 1/1. It participates in amino-acid biosynthesis; L-arginine biosynthesis; N(2)-acetyl-L-ornithine from L-glutamate: step 1/4. Catalyzes two activities which are involved in the cyclic version of arginine biosynthesis: the synthesis of N-acetylglutamate from glutamate and acetyl-CoA as the acetyl donor, and of ornithine by transacetylation between N(2)-acetylornithine and glutamate. This is Arginine biosynthesis bifunctional protein ArgJ from Pseudomonas syringae pv. syringae (strain B728a).